Here is a 130-residue protein sequence, read N- to C-terminus: Cytochrome b-c1 complex subunit 7 (130 aa).

Belongs to the UQCRB/QCR7 family. As to quaternary structure, component of the ubiquinol-cytochrome c oxidoreductase (cytochrome b-c1 complex, complex III, CIII), a multisubunit enzyme composed of 3 respiratory subunits cytochrome b, cytochrome c1 and Rieske protein, 2 core protein subunits, and additional low-molecular weight protein subunits. The complex exists as an obligatory dimer and forms supercomplexes (SCs) in the inner mitochondrial membrane with cytochrome c oxidase (complex IV, CIV).

Its subcellular location is the mitochondrion inner membrane. Component of the ubiquinol-cytochrome c oxidoreductase, a multisubunit transmembrane complex that is part of the mitochondrial electron transport chain which drives oxidative phosphorylation. The respiratory chain contains 3 multisubunit complexes succinate dehydrogenase (complex II, CII), ubiquinol-cytochrome c oxidoreductase (cytochrome b-c1 complex, complex III, CIII) and cytochrome c oxidase (complex IV, CIV), that cooperate to transfer electrons derived from NADH and succinate to molecular oxygen, creating an electrochemical gradient over the inner membrane that drives transmembrane transport and the ATP synthase. The cytochrome b-c1 complex catalyzes electron transfer from ubiquinol to cytochrome c, linking this redox reaction to translocation of protons across the mitochondrial inner membrane, with protons being carried across the membrane as hydrogens on the quinol. In the process called Q cycle, 2 protons are consumed from the matrix, 4 protons are released into the intermembrane space and 2 electrons are passed to cytochrome c. The chain is Cytochrome b-c1 complex subunit 7 from Schistosoma mansoni (Blood fluke).